Consider the following 269-residue polypeptide: uncharacterized protein (269 aa).

The RPE1 insert domain maps to Arg-152 to Ser-197.

This is an uncharacterized protein from Rickettsia prowazekii (strain Madrid E).